We begin with the raw amino-acid sequence, 155 residues long: Large ribosomal subunit protein uL30 (155 aa).

This sequence belongs to the universal ribosomal protein uL30 family. Part of the 50S ribosomal subunit.

This chain is Large ribosomal subunit protein uL30, found in Nitrosopumilus maritimus (strain SCM1).